Here is a 125-residue protein sequence, read N- to C-terminus: Small ribosomal subunit protein uS13 (125 aa).

Residues 95 to 125 (GLPLRGQRTKTNARTRKGKRKTVANKKIASK) form a disordered region.

Belongs to the universal ribosomal protein uS13 family. In terms of assembly, part of the 30S ribosomal subunit. Forms a loose heterodimer with protein S19. Forms two bridges to the 50S subunit in the 70S ribosome.

Functionally, located at the top of the head of the 30S subunit, it contacts several helices of the 16S rRNA. In the 70S ribosome it contacts the 23S rRNA (bridge B1a) and protein L5 of the 50S subunit (bridge B1b), connecting the 2 subunits; these bridges are implicated in subunit movement. Contacts the tRNAs in the A and P-sites. This Borreliella burgdorferi (strain ATCC 35210 / DSM 4680 / CIP 102532 / B31) (Borrelia burgdorferi) protein is Small ribosomal subunit protein uS13.